A 265-amino-acid polypeptide reads, in one-letter code: Phosphate import ATP-binding protein PstB (265 aa).

Positions Ile-18–Ile-260 constitute an ABC transporter domain. Gly-50–Ser-57 contacts ATP.

Belongs to the ABC transporter superfamily. Phosphate importer (TC 3.A.1.7) family. In terms of assembly, the complex is composed of two ATP-binding proteins (PstB), two transmembrane proteins (PstC and PstA) and a solute-binding protein (PstS).

The protein localises to the cell inner membrane. It carries out the reaction phosphate(out) + ATP + H2O = ADP + 2 phosphate(in) + H(+). In terms of biological role, part of the ABC transporter complex PstSACB involved in phosphate import. Responsible for energy coupling to the transport system. This Ruegeria sp. (strain TM1040) (Silicibacter sp.) protein is Phosphate import ATP-binding protein PstB.